The following is a 395-amino-acid chain: Probable beta-1,3-galactosyltransferase 8 (395 aa).

A helical; Signal-anchor for type II membrane protein membrane pass occupies residues 5 to 27; that stretch reads AASGKAIIVLCLASFLAGSLFMS. The N-linked (GlcNAc...) asparagine glycan is linked to asparagine 117.

Belongs to the glycosyltransferase 31 family. Requires Mn(2+) as cofactor.

It is found in the golgi apparatus membrane. It participates in protein modification; protein glycosylation. Beta-1,3-galactosyltransferase that transfers galactose from UDP-galactose to substrates with a terminal glycosyl residue. The protein is Probable beta-1,3-galactosyltransferase 8 (B3GALT8) of Arabidopsis thaliana (Mouse-ear cress).